A 410-amino-acid chain; its full sequence is Chlorobenzene dioxygenase, ferredoxin reductase component (410 aa).

4-35 contributes to the FAD binding site; sequence HVAIIGNGVAGFTTAQALRAEGFEGRISLIGN. 145–173 provides a ligand contact to NAD(+); that stretch reads RLVIAGGGLIGCEVATTARKLGLAVTILE.

This sequence belongs to the bacterial ring-hydroxylating dioxygenase ferredoxin reductase family. In terms of assembly, this dioxygenase system consists of four proteins: the two subunits of the oxygenase component (TecA1 and TecA2), a ferredoxin (TecA3) and a ferredoxin reductase (TecA4). The cofactor is FAD.

The enzyme catalyses 2 reduced [2Fe-2S]-[ferredoxin] + NAD(+) + H(+) = 2 oxidized [2Fe-2S]-[ferredoxin] + NADH. Its pathway is aromatic compound metabolism. Part of the chlorobenzene dioxygenase system that catalyzes the dihydroxylation of a range of aromatic compounds, including chlorinated benzenes and toluenes, and dinuclear aromatics such as biphenyl and dibenzo-p-dioxin. The protein is Chlorobenzene dioxygenase, ferredoxin reductase component of Cupriavidus sp. (strain PS12).